Reading from the N-terminus, the 33-residue chain is Photosystem II reaction center protein Psb30 (33 aa).

A helical membrane pass occupies residues 5 to 25; the sequence is IVAQLTVLALIVVSGPLVIAL.

It belongs to the Psb30/Ycf12 family. PSII is composed of 1 copy each of membrane proteins PsbA, PsbB, PsbC, PsbD, PsbE, PsbF, PsbH, PsbI, PsbJ, PsbK, PsbL, PsbM, PsbT, PsbX, PsbY, PsbZ, Psb30/Ycf12, peripheral proteins of the oxygen-evolving complex and a large number of cofactors. It forms dimeric complexes.

The protein resides in the plastid. The protein localises to the chloroplast thylakoid membrane. Functionally, a core subunit of photosystem II (PSII), probably helps stabilize the reaction center. The chain is Photosystem II reaction center protein Psb30 from Angiopteris evecta (Mule's foot fern).